The sequence spans 174 residues: MLTYGKPFNFQRWIDDHAHLLKPPVGNQQVWQDSDFIVTVVGGPNHRTDYHDDPLEEFFYQLRGNAYLHLWIDGKRERVDLKEGDVFLLPPHVRHSPQRPEAGSVCLVIERQRPAGVVDGFEWYCDACGHLVYRVEVQLKSIVSDLPPLFNAFYASEEKRRCGHCGHVHPGKAV.

Arg47 contributes to the O2 binding site. Positions 51, 57, and 95 each coordinate Fe cation. Substrate is bound at residue Glu57. The substrate site is built by Arg99 and Glu110. Fe cation contacts are provided by Cys125, Cys128, Cys162, and Cys165.

The protein belongs to the 3-HAO family. In terms of assembly, homodimer. It depends on Fe(2+) as a cofactor.

It catalyses the reaction 3-hydroxyanthranilate + O2 = (2Z,4Z)-2-amino-3-carboxymuconate 6-semialdehyde. It functions in the pathway cofactor biosynthesis; NAD(+) biosynthesis; quinolinate from L-kynurenine: step 3/3. Catalyzes the oxidative ring opening of 3-hydroxyanthranilate to 2-amino-3-carboxymuconate semialdehyde, which spontaneously cyclizes to quinolinate. The chain is 3-hydroxyanthranilate 3,4-dioxygenase from Paraburkholderia phytofirmans (strain DSM 17436 / LMG 22146 / PsJN) (Burkholderia phytofirmans).